The chain runs to 412 residues: 2,3-bisphosphoglycerate-independent phosphoglycerate mutase (412 aa).

This sequence belongs to the BPG-independent phosphoglycerate mutase family. A-PGAM subfamily.

It carries out the reaction (2R)-2-phosphoglycerate = (2R)-3-phosphoglycerate. It participates in carbohydrate degradation; glycolysis; pyruvate from D-glyceraldehyde 3-phosphate: step 3/5. Functionally, catalyzes the interconversion of 2-phosphoglycerate and 3-phosphoglycerate. In Pyrococcus horikoshii (strain ATCC 700860 / DSM 12428 / JCM 9974 / NBRC 100139 / OT-3), this protein is 2,3-bisphosphoglycerate-independent phosphoglycerate mutase (apgM).